Reading from the N-terminus, the 641-residue chain is Homeobox protein ceh-38 (641 aa).

2 stretches are compositionally biased toward polar residues: residues 1-14 and 28-38; these read MESS…TNGT and DPSSTFINNTG. Disordered regions lie at residues 1 to 79 and 129 to 244; these read MESS…TSSA and LHVD…GDRM. The span at 52-79 shows a compositional bias: low complexity; it reads TISPHPITPSASTSSATSATEEPATSSA. Residues 131–140 show a composition bias toward basic and acidic residues; it reads VDSRRRESHD. Polar residues-rich tracts occupy residues 167 to 183 and 190 to 204; these read TPTN…SSLL and NTIG…TFGS. The segment at residues 308–394 is a DNA-binding region (CUT); sequence NAEIGDDIYI…TRLAILDMKT (87 aa). 3 disordered regions span residues 398–428, 485–508, and 552–641; these read NRAS…PVSK, GGNI…VGDT, and FGVS…LAAN. A DNA-binding region (homeobox) is located at residues 427–486; sequence SKRPRLVFTDIQKRTLQAIFKETQRPSREMQQTIAEHLRLDLSTVANFFMNARRRSRLGG. The span at 571-604 shows a compositional bias: acidic residues; that stretch reads HEDDEELDELNDSELAYEEDVEIGDEEEEDEEQA. Over residues 613 to 626 the composition is skewed to basic and acidic residues; the sequence is KVEELEEKTVIKEE.

This sequence belongs to the CUT homeobox family. As to expression, expressed in the embryo. After gastrulation, expressed in almost all cells. During larval and adult stages, expressed in the dorsal and ventral nerve cord, head and tail neurons, pharynx, gut and head.

It localises to the nucleus. Probable DNA-binding regulatory protein involved in cell-fate specification. In Caenorhabditis elegans, this protein is Homeobox protein ceh-38 (ceh-38).